We begin with the raw amino-acid sequence, 301 residues long: Protein phosphatase 1 regulatory subunit 3B (301 aa).

The PP1-binding motif motif lies at 79–82 (RVSF). Positions 142–250 (RNRLQAESVC…SNKGLNYRIV (109 aa)) constitute a CBM21 domain.

In terms of assembly, interacts with glycogen, PPP1CC catalytic subunit of PP1 and PYGL. Associates with glycogen particles. Forms complexes with debranching enzyme, glycogen phosphorylase, glycogen synthase and phosphorylase kinase which is necessary for its regulation of PP1 activity.

Functionally, acts as a glycogen-targeting subunit for phosphatase PP1. Facilitates interaction of the PP1 with enzymes of the glycogen metabolism and regulates its activity. Suppresses the rate at which PP1 dephosphorylates (inactivates) glycogen phosphorylase and enhances the rate at which it activates glycogen synthase and therefore limits glycogen breakdown. This chain is Protein phosphatase 1 regulatory subunit 3B (ppp1r3b), found in Xenopus tropicalis (Western clawed frog).